The chain runs to 377 residues: Chaperone protein DnaJ (377 aa).

Residues 5 to 70 (DYYELLGLQK…EKKAKYDQFG (66 aa)) form the J domain. Residues 137–219 (GVEKEISVTR…CRGKGSVRKT (83 aa)) form a CR-type zinc finger. Residues cysteine 150, cysteine 153, cysteine 167, cysteine 170, cysteine 193, cysteine 196, cysteine 207, and cysteine 210 each coordinate Zn(2+). 4 CXXCXGXG motif repeats span residues 150 to 157 (CEHCHGSG), 167 to 174 (CPTCSGSG), 193 to 200 (CDTCRGTG), and 207 to 214 (CSECRGKG).

This sequence belongs to the DnaJ family. In terms of assembly, homodimer. Requires Zn(2+) as cofactor.

The protein localises to the cytoplasm. Functionally, participates actively in the response to hyperosmotic and heat shock by preventing the aggregation of stress-denatured proteins and by disaggregating proteins, also in an autonomous, DnaK-independent fashion. Unfolded proteins bind initially to DnaJ; upon interaction with the DnaJ-bound protein, DnaK hydrolyzes its bound ATP, resulting in the formation of a stable complex. GrpE releases ADP from DnaK; ATP binding to DnaK triggers the release of the substrate protein, thus completing the reaction cycle. Several rounds of ATP-dependent interactions between DnaJ, DnaK and GrpE are required for fully efficient folding. Also involved, together with DnaK and GrpE, in the DNA replication of plasmids through activation of initiation proteins. This chain is Chaperone protein DnaJ, found in Clostridium beijerinckii (strain ATCC 51743 / NCIMB 8052) (Clostridium acetobutylicum).